Reading from the N-terminus, the 678-residue chain is Protein CASP (678 aa).

Residues 1-619 (MAANVGSMFQ…LVLSNKMART (619 aa)) are Cytoplasmic-facing. Coiled-coil stretches lie at residues 67-450 (LLKS…QDLS) and 502-556 (LSII…FLQS). Phosphoserine is present on serine 586. Residues 620–640 (IGFFYTLFLHCLVFLVLYKLA) form a helical; Anchor for type IV membrane protein membrane-spanning segment. Over 641–678 (WSESMERDCATFCAKKFADHLHKFHENDNGAAAGDLWQ) the chain is Lumenal.

Belongs to the CASP family. Homodimer; disulfide-linked. Interacts with GOLGA5.

It localises to the golgi apparatus membrane. May be involved in intra-Golgi retrograde transport. The protein is Protein CASP (CUX1) of Homo sapiens (Human).